A 110-amino-acid chain; its full sequence is DNA-directed RNA polymerase subunit omega (110 aa).

This sequence belongs to the RNA polymerase subunit omega family. As to quaternary structure, the RNAP catalytic core consists of 2 alpha, 1 beta, 1 beta' and 1 omega subunit. When a sigma factor is associated with the core the holoenzyme is formed, which can initiate transcription.

The enzyme catalyses RNA(n) + a ribonucleoside 5'-triphosphate = RNA(n+1) + diphosphate. In terms of biological role, promotes RNA polymerase assembly. Latches the N- and C-terminal regions of the beta' subunit thereby facilitating its interaction with the beta and alpha subunits. The protein is DNA-directed RNA polymerase subunit omega of Mycobacterium leprae (strain Br4923).